Consider the following 173-residue polypeptide: MAKVQGKNAAEKENDDGLREKMIAVNRVSKVVKGGRTMSFAALTVVGDGDGRIGMGKGKAREVPVSVQKAMEQARRGMFKVALKNGTLYHTVVGKHGASTVLISPAAEGTGVIAGGPMRAIFEVMGVRNVVAKSLGSSNPYNMVRATLNGLRNSLTPSEVAAKRGKSVEEILG.

Residues 18-81 form the S5 DRBM domain; that stretch reads LREKMIAVNR…EQARRGMFKV (64 aa).

This sequence belongs to the universal ribosomal protein uS5 family. In terms of assembly, part of the 30S ribosomal subunit. Contacts proteins S4 and S8.

Functionally, with S4 and S12 plays an important role in translational accuracy. In terms of biological role, located at the back of the 30S subunit body where it stabilizes the conformation of the head with respect to the body. The chain is Small ribosomal subunit protein uS5 from Bordetella avium (strain 197N).